Reading from the N-terminus, the 460-residue chain is Cysteine--tRNA ligase (460 aa).

Zn(2+) is bound at residue Cys27. Positions 29-39 (PTVYDLIHVGN) match the 'HIGH' region motif. Zn(2+) is bound by residues Cys207, His232, and Glu236. A 'KMSKS' region motif is present at residues 264–268 (KMSKS). Lys267 contacts ATP.

This sequence belongs to the class-I aminoacyl-tRNA synthetase family. In terms of assembly, monomer. Zn(2+) serves as cofactor.

It localises to the cytoplasm. It catalyses the reaction tRNA(Cys) + L-cysteine + ATP = L-cysteinyl-tRNA(Cys) + AMP + diphosphate. This Thermotoga petrophila (strain ATCC BAA-488 / DSM 13995 / JCM 10881 / RKU-1) protein is Cysteine--tRNA ligase.